The primary structure comprises 320 residues: Malate dehydrogenase 2 (320 aa).

NAD(+) is bound by residues 10–15 (GAGQIG) and D34. Residues R83 and R89 each contribute to the substrate site. Residues N96 and 119–121 (ITN) contribute to the NAD(+) site. Substrate is bound by residues N121 and R152. H176 serves as the catalytic Proton acceptor.

Belongs to the LDH/MDH superfamily. MDH type 3 family.

The enzyme catalyses (S)-malate + NAD(+) = oxaloacetate + NADH + H(+). In terms of biological role, catalyzes the reversible oxidation of malate to oxaloacetate. The protein is Malate dehydrogenase 2 of Rhodopseudomonas palustris (strain BisB18).